Reading from the N-terminus, the 556-residue chain is Solute carrier family 22 member 1 (556 aa).

Over 1–21 (MPTVDDVLEQVGEFGWFQKQA) the chain is Cytoplasmic. The helical transmembrane segment at 22–42 (FLLLCLISASLAPIYVGIVFL) threads the bilayer. The Extracellular segment spans residues 43-150 (GFTPGHYCQN…LVCGDAWKVD (108 aa)). Asn71 is a glycosylation site (N-linked (GlcNAc...) asparagine). Residues 151–171 (LFQSCVNLGFFLGSLVVGYIA) traverse the membrane as a helical segment. Over 172-177 (DRFGRK) the chain is Cytoplasmic. Residues 178–198 (LCLLVTTLVTSVSGVLTAVAP) traverse the membrane as a helical segment. Residues 199–211 (DYTSMLLFRLLQG) lie on the Extracellular side of the membrane. The helical transmembrane segment at 212–231 (MVSKGSWVSGYTLITEFVGS) threads the bilayer. At 232-238 (GYRRTTA) the chain is on the cytoplasmic side. The chain crosses the membrane as a helical span at residues 239 to 259 (ILYQMAFTVGLVGLAGVAYAI). Residues 260 to 263 (PDWR) are Extracellular-facing. The chain crosses the membrane as a helical span at residues 264–284 (WLQLAVSLPTFLFLLYYWFVP). The short motif at 284–288 (PESPR) is the Proline-rich sequence element. Topologically, residues 285–348 (ESPRWLLSQK…FRTPNLRKHT (64 aa)) are cytoplasmic. Phosphoserine is present on Ser334. Residues 349–369 (VILMYLWFSCAVLYQGLIMHV) form a helical membrane-spanning segment. Residues 370–377 (GATGANLY) are Extracellular-facing. A helical transmembrane segment spans residues 378-398 (LDFFYSSLVEFPAAFIILVTI). Residues 399-403 (DRIGR) lie on the Cytoplasmic side of the membrane. The helical transmembrane segment at 404–424 (IYPIAASNLVTGAACLLMIFI) threads the bilayer. The Extracellular portion of the chain corresponds to 425 to 429 (PHELH). A helical membrane pass occupies residues 430–452 (WLNVTLACLGRMGATIVLQMVCL). Residues 453 to 465 (VNAELYPTFIRNL) lie on the Cytoplasmic side of the membrane. A helical transmembrane segment spans residues 466–486 (GMMVCSALCDLGGIFTPFMVF). Over 487–493 (RLMEVWQ) the chain is Extracellular. Residues 494–514 (ALPLILFGVLGLTAGAMTLLL) form a helical membrane-spanning segment. At 515–556 (PETKGVALPETIEEAENLGRRKSKAKENTIYLQVQTGKSSST) the chain is on the cytoplasmic side. The residue at position 543 (Thr543) is a Phosphothreonine.

The protein belongs to the major facilitator (TC 2.A.1) superfamily. Organic cation transporter (TC 2.A.1.19) family. Post-translationally, phosphorylated. Expressed in kidney cortex in S1, S2 segments of renal proximal tubules as well as in kidney medulla. Expressed throughout the liver lobuli, in hepatocytes surrounding the central veins. Expressed in enterocytes of villi and crypts in small intestine. Expressed in brain, in some white matter regions like the corpus callosum and in the granular layer of the cerebellum. Expressed in Sertoli cells in testis. Expressed in colon. Expressed in tracheal and bronchial ciliated epithelium in the respiratory tract. Expressed in spleen, moderately in skin, and weakly in the gastrointestinal tract, lung, thymus, muscle, and prostate. In terms of tissue distribution, expressed in kidney cortex and medulla. Expressed in intestine, liver and colon.

The protein localises to the basolateral cell membrane. The protein resides in the apical cell membrane. It localises to the lateral cell membrane. Its subcellular location is the basal cell membrane. It is found in the cell membrane. The enzyme catalyses 1-methylnicotinamide(out) = 1-methylnicotinamide(in). The catalysed reaction is dopamine(out) = dopamine(in). It catalyses the reaction serotonin(out) = serotonin(in). It carries out the reaction (R)-adrenaline(out) = (R)-adrenaline(in). The enzyme catalyses (R)-noradrenaline(out) = (R)-noradrenaline(in). The catalysed reaction is histamine(out) = histamine(in). It catalyses the reaction guanidine(out) = guanidine(in). It carries out the reaction choline(out) = choline(in). The enzyme catalyses acetylcholine(in) = acetylcholine(out). The catalysed reaction is thiamine(in) = thiamine(out). It catalyses the reaction agmatine(out) = agmatine(in). It carries out the reaction putrescine(out) = putrescine(in). The enzyme catalyses spermidine(in) = spermidine(out). The catalysed reaction is (R)-carnitine(in) = (R)-carnitine(out). It catalyses the reaction O-isobutanoyl-(R)-carnitine(in) = O-isobutanoyl-(R)-carnitine(out). It carries out the reaction O-acetyl-(R)-carnitine(in) = O-acetyl-(R)-carnitine(out). The enzyme catalyses O-3-hydroxybutanoyl-(R)-carnitine(in) = O-3-hydroxybutanoyl-(R)-carnitine(out). The catalysed reaction is O-propanoyl-(R)-carnitine(in) = O-propanoyl-(R)-carnitine(out). It catalyses the reaction O-butanoyl-(R)-carnitine(in) = O-butanoyl-(R)-carnitine(out). It carries out the reaction O-2-methylbutanoyl-(R)-carnitine(in) = O-2-methylbutanoyl-(R)-carnitine(out). The enzyme catalyses O-3-methylbutanoyl-(R)-carnitine(in) = O-3-methylbutanoyl-(R)-carnitine(out). The catalysed reaction is O-hexanoyl-(R)-carnitine(in) = O-hexanoyl-(R)-carnitine(out). It catalyses the reaction L-histidyl-L-proline diketopiperazine(in) = L-histidyl-L-proline diketopiperazine(out). It carries out the reaction (R)-salsolinol(in) = (R)-salsolinol(out). The enzyme catalyses prostaglandin F2alpha(out) = prostaglandin F2alpha(in). The catalysed reaction is prostaglandin E2(out) = prostaglandin E2(in). With respect to regulation, phosphorylation of the transporter leads to changes in its substrate affinity, resulting in a regulation of the transport activity. In contrast with human ortholog, ASP uptake is stimulated by protein kinase A (PKA) and C (PKC) and endogenous tyrosine kinase activation. ASP affinity is induced by PKC-dependent phosphorylation. Inhibited by cGMP, most likely through a cGMP-binding protein that interacts with OCT1. In terms of biological role, electrogenic voltage-dependent transporter that mediates the transport of a variety of organic cations such as endogenous bioactive amines, cationic drugs and xenobiotics. Functions as a pH- and Na(+)-independent, bidirectional transporter. Cation cellular uptake or release is driven by the electrochemical potential (i.e. membrane potential and concentration gradient) and substrate selectivity. Hydrophobicity is a major requirement for recognition in polyvalent substrates and inhibitors. Primarily expressed in the basolateral membrane of hepatocytes and proximal tubules and involved in the uptake and disposition of cationic compounds from the blood by hepatic and renal clearance. Most likely functions as an uptake carrier in enterocytes contributing to the intestinal excretion and elimination of organic cations from the systemic circulation. Transports endogenous monoamines such as N-1-methylnicotinamide (NMN), guanidine, neurotransmitters dopamine, serotonin, noradrenaline, adrenaline and histamine, and quaternary ammonium compound such as choline. Also transports natural polyamines such as spermidine, agmatine and putrescine at low affinity, but relatively high turnover. Involved in the hepatic uptake of vitamin B1/thiamine, hence regulating hepatic lipid and energy metabolism. Contributes to the influx and efflux of fatty acid carriers carnitines and acylcarnitines across the basolateral membrane of hepatocytes, from the liver to the systemic circulation and inversely and may be involved in regulating the systemic availability of hepatic acylcarnitines. Mediates the bidirectional transport of acetylcholine (ACh) at the apical membrane of ciliated cell in airway epithelium, thereby playing a role in luminal release of ACh from bronchial epithelium. Transports dopaminergic neuromodulators cyclo(his-pro) and salsolinol with lower efficency. Also capable of transporting non-amine endogenous compounds such as prostaglandin E2 (PGE2) and prostaglandin F2-alpha (PGF2-alpha). May contribute to the transport of cationic compounds in testis across the blood-testis-barrier. Also mediates the uptake of xenobiotics tributylmethylammonium (TBuMA), quinidine, N-methyl-quinine (NMQ), N-methyl-quinidine (NMQD) N-(4,4-azo-n-pentyl)-quinuclidine (APQ), azidoprocainamide methoiodide (AMP), N-(4,4-azo-n-pentyl)-21-deoxyajmalinium (APDA) and 4-(4-(dimethylamino)styryl)-N-methylpyridinium (ASP). Functional isoform capable of transporting TEA. The protein is Solute carrier family 22 member 1 of Rattus norvegicus (Rat).